The sequence spans 270 residues: Thiamine thiazole synthase (270 aa).

NAD(+) contacts are provided by residues alanine 39, 58 to 59 (EQ), glycine 66, and leucine 130. Cysteine 159 carries the post-translational modification 2,3-didehydroalanine (Cys). Aspartate 161 serves as a coordination point for NAD(+). The Fe cation site is built by aspartate 161 and histidine 176. Residue isoleucine 223 coordinates NAD(+). Arginine 233 provides a ligand contact to glycine.

The protein belongs to the THI4 family. As to quaternary structure, homooctamer; tetramer of dimers. It depends on Fe(2+) as a cofactor. In terms of processing, during the catalytic reaction, a sulfide is transferred from Cys-159 to a reaction intermediate, generating a dehydroalanine residue.

It carries out the reaction [ADP-thiazole synthase]-L-cysteine + glycine + NAD(+) = [ADP-thiazole synthase]-dehydroalanine + ADP-5-ethyl-4-methylthiazole-2-carboxylate + nicotinamide + 3 H2O + 2 H(+). It functions in the pathway cofactor biosynthesis; thiamine diphosphate biosynthesis. Involved in biosynthesis of the thiamine precursor thiazole. Catalyzes the conversion of NAD and glycine to adenosine diphosphate 5-(2-hydroxyethyl)-4-methylthiazole-2-carboxylic acid (ADT), an adenylated thiazole intermediate. The reaction includes an iron-dependent sulfide transfer from a conserved cysteine residue of the protein to a thiazole intermediate. The enzyme can only undergo a single turnover, which suggests it is a suicide enzyme. This chain is Thiamine thiazole synthase, found in Aeropyrum pernix (strain ATCC 700893 / DSM 11879 / JCM 9820 / NBRC 100138 / K1).